The primary structure comprises 226 residues: Ribonuclease 3 (226 aa).

One can recognise an RNase III domain in the interval 6–128 (ANKIQQILGY…LIGSIYLDSN (123 aa)). A Mg(2+)-binding site is contributed by glutamate 41. Aspartate 45 is an active-site residue. Asparagine 114 and glutamate 117 together coordinate Mg(2+). Glutamate 117 is a catalytic residue. Residues 155-225 (DPKTRLQEYL…ARKALIKLGV (71 aa)) enclose the DRBM domain.

Belongs to the ribonuclease III family. In terms of assembly, homodimer. The cofactor is Mg(2+).

The protein localises to the cytoplasm. It carries out the reaction Endonucleolytic cleavage to 5'-phosphomonoester.. Digests double-stranded RNA. Involved in the processing of primary rRNA transcript to yield the immediate precursors to the large and small rRNAs (23S and 16S). Processes some mRNAs, and tRNAs when they are encoded in the rRNA operon. Processes pre-crRNA and tracrRNA of type II CRISPR loci if present in the organism. The sequence is that of Ribonuclease 3 from Buchnera aphidicola subsp. Schizaphis graminum (strain Sg).